The chain runs to 189 residues: Mu-like prophage FluMu protein gp27 (189 aa).

To phage Mu protein gp27.

The sequence is that of Mu-like prophage FluMu protein gp27 from Haemophilus influenzae (strain ATCC 51907 / DSM 11121 / KW20 / Rd).